The sequence spans 954 residues: Kinesin-like protein KIN-14A (954 aa).

Positions 24–142 (ALRRHQAATW…CVISLKSYHE (119 aa)) constitute a Calponin-homology (CH) domain. Residues 242–293 (LSRQLEKEQSSNSQVENRRRLLQAQESELLELKSMFQEVKIDFRTLKTQFQD) are a coiled coil. Residues 332-651 (NIRVFCRIRP…LKFAQRASCV (320 aa)) enclose the Kinesin motor domain. 413 to 420 (GQTGSGKT) serves as a coordination point for ATP. Residues 656-692 (AHANKESNEIRELKEQVENLKRALAAKELEKSSFKLK) are a coiled coil. Residues 697 to 709 (VRERAKQVPERTP) are compositionally biased toward basic and acidic residues. Disordered stretches follow at residues 697-743 (VRER…TKLN), 824-858 (NLEV…RKSI), and 882-954 (PAKI…KRWL). Polar residues-rich tracts occupy residues 831 to 849 (DEPS…NATK) and 886 to 898 (ANST…SSIT).

The protein belongs to the TRAFAC class myosin-kinesin ATPase superfamily. Kinesin family. KIN-14 subfamily.

This Oryza sativa subsp. japonica (Rice) protein is Kinesin-like protein KIN-14A.